The primary structure comprises 326 residues: GTPase Obg (326 aa).

In terms of domain architecture, Obg spans 1–159 (MKFVDSAKIY…LEIELELKLM (159 aa)). Positions 119–138 (EGGKGGKGNPHFASSTRQAP) are disordered. The region spanning 160–323 (ADVGLVGFPN…LKDELWSRVK (164 aa)) is the OBG-type G domain. GTP contacts are provided by residues 166-173 (GFPNAGKS), 191-195 (FTTLV), 213-216 (DIPG), 280-283 (TKMD), and 304-306 (SSV). The Mg(2+) site is built by Ser-173 and Thr-193.

The protein belongs to the TRAFAC class OBG-HflX-like GTPase superfamily. OBG GTPase family. In terms of assembly, monomer. It depends on Mg(2+) as a cofactor.

Its subcellular location is the cytoplasm. Its function is as follows. An essential GTPase which binds GTP, GDP and possibly (p)ppGpp with moderate affinity, with high nucleotide exchange rates and a fairly low GTP hydrolysis rate. Plays a role in control of the cell cycle, stress response, ribosome biogenesis and in those bacteria that undergo differentiation, in morphogenesis control. The sequence is that of GTPase Obg from Chlorobium phaeobacteroides (strain BS1).